The primary structure comprises 450 residues: Probable glycine dehydrogenase (decarboxylating) subunit 1 (450 aa).

The protein belongs to the GcvP family. N-terminal subunit subfamily. The glycine cleavage system is composed of four proteins: P, T, L and H. In this organism, the P 'protein' is a heterodimer of two subunits.

It carries out the reaction N(6)-[(R)-lipoyl]-L-lysyl-[glycine-cleavage complex H protein] + glycine + H(+) = N(6)-[(R)-S(8)-aminomethyldihydrolipoyl]-L-lysyl-[glycine-cleavage complex H protein] + CO2. In terms of biological role, the glycine cleavage system catalyzes the degradation of glycine. The P protein binds the alpha-amino group of glycine through its pyridoxal phosphate cofactor; CO(2) is released and the remaining methylamine moiety is then transferred to the lipoamide cofactor of the H protein. In Staphylococcus haemolyticus (strain JCSC1435), this protein is Probable glycine dehydrogenase (decarboxylating) subunit 1.